A 186-amino-acid chain; its full sequence is dCTP deaminase (186 aa).

Residue 107-112 (KSTYAR) coordinates dCTP. The active-site Proton donor/acceptor is the glutamate 133. Residues glutamine 152, tyrosine 166, and glutamine 176 each contribute to the dCTP site.

This sequence belongs to the dCTP deaminase family. As to quaternary structure, homotrimer.

It carries out the reaction dCTP + H2O + H(+) = dUTP + NH4(+). It participates in pyrimidine metabolism; dUMP biosynthesis; dUMP from dCTP (dUTP route): step 1/2. Its function is as follows. Catalyzes the deamination of dCTP to dUTP. This is dCTP deaminase from Campylobacter fetus subsp. fetus (strain 82-40).